We begin with the raw amino-acid sequence, 438 residues long: Probable imidazolonepropionase (438 aa).

2 residues coordinate 4-imidazolone-5-propanoate: Tyr159 and His192. Tyr159 lines the N-formimidoyl-L-glutamate pocket. Residue His260 participates in Fe(3+) binding. His260 serves as a coordination point for Zn(2+). A 4-imidazolone-5-propanoate-binding site is contributed by Glu263. Asp334 provides a ligand contact to Fe(3+). Zn(2+) is bound at residue Asp334. Asn336 provides a ligand contact to N-formimidoyl-L-glutamate.

This sequence belongs to the metallo-dependent hydrolases superfamily. HutI family. The cofactor is Zn(2+). It depends on Fe(3+) as a cofactor.

The enzyme catalyses 4-imidazolone-5-propanoate + H2O = N-formimidoyl-L-glutamate. Its pathway is amino-acid degradation; L-histidine degradation into L-glutamate; N-formimidoyl-L-glutamate from L-histidine: step 3/3. The protein is Probable imidazolonepropionase (amdhd1) of Xenopus laevis (African clawed frog).